The primary structure comprises 288 residues: Aminoglycoside 6-adenylyltransferase (288 aa).

The catalysed reaction is streptomycin + ATP = 6-O-adenylylstreptomycin + diphosphate. In terms of biological role, mediates bacterial resistance to streptomycin, is probably a streptomycin 6-adenylyltransferase. This Campylobacter jejuni protein is Aminoglycoside 6-adenylyltransferase.